The sequence spans 280 residues: Probable endonuclease 4 (280 aa).

9 residues coordinate Zn(2+): H69, H109, E145, D179, H182, H216, D229, H231, and E261.

The protein belongs to the AP endonuclease 2 family. The cofactor is Zn(2+).

It carries out the reaction Endonucleolytic cleavage to 5'-phosphooligonucleotide end-products.. In terms of biological role, endonuclease IV plays a role in DNA repair. It cleaves phosphodiester bonds at apurinic or apyrimidinic (AP) sites, generating a 3'-hydroxyl group and a 5'-terminal sugar phosphate. In Actinobacillus pleuropneumoniae serotype 7 (strain AP76), this protein is Probable endonuclease 4.